The chain runs to 451 residues: Type 3 secretion system ATPase (451 aa).

184–189 is an ATP binding site; the sequence is GGGKST.

The protein belongs to the ATPase alpha/beta chains family. T3SS ATPase subfamily. As to quaternary structure, the core secretion machinery of the T3SS is composed of approximately 20 different proteins, including cytoplasmic components, a base, an export apparatus and a needle. This subunit is part of the cytosolic complex. Forms homohexamers.

The protein resides in the cytoplasm. The catalysed reaction is ATP + H2O + cellular proteinSide 1 = ADP + phosphate + cellular proteinSide 2.. In terms of biological role, ATPase component of the type III secretion system (T3SS), also called injectisome, which is used to inject bacterial effector proteins into eukaryotic host cells. Acts as a molecular motor to provide the energy that is required for the export of proteins. Required for type III secretion apparatus (T3SA) formation, proper protein secretion, host cell invasion and virulence. May play a critical role in T3SS substrate recognition, disassembly of the effector/chaperone complex and unfolding of the effector in an ATP-dependent manner prior to secretion. The polypeptide is Type 3 secretion system ATPase (Sinorhizobium fredii (strain NBRC 101917 / NGR234)).